A 161-amino-acid chain; its full sequence is MSGKGAPELSVRNVGDLRVAVIASQWHDKVMDGLVDGALRALHELGIDEPTLLRVPGSFELPVVAKVLAGRGYDAIVALGVVIRGGTPHFDYVCQGVTQGLVQVSVETGVPVGFGVLTCDTEEQALDRAGIEGSSEDKGHEAVTAAVATAATLRSVSEPWR.

5-amino-6-(D-ribitylamino)uracil-binding positions include tryptophan 26, 58–60 (SFE), and 81–83 (VVI). 86 to 87 (GT) is a (2S)-2-hydroxy-3-oxobutyl phosphate binding site. Histidine 89 serves as the catalytic Proton donor. Phenylalanine 114 contributes to the 5-amino-6-(D-ribitylamino)uracil binding site. Arginine 128 contacts (2S)-2-hydroxy-3-oxobutyl phosphate.

It belongs to the DMRL synthase family.

It catalyses the reaction (2S)-2-hydroxy-3-oxobutyl phosphate + 5-amino-6-(D-ribitylamino)uracil = 6,7-dimethyl-8-(1-D-ribityl)lumazine + phosphate + 2 H2O + H(+). It participates in cofactor biosynthesis; riboflavin biosynthesis; riboflavin from 2-hydroxy-3-oxobutyl phosphate and 5-amino-6-(D-ribitylamino)uracil: step 1/2. Functionally, catalyzes the formation of 6,7-dimethyl-8-ribityllumazine by condensation of 5-amino-6-(D-ribitylamino)uracil with 3,4-dihydroxy-2-butanone 4-phosphate. This is the penultimate step in the biosynthesis of riboflavin. This Streptomyces coelicolor (strain ATCC BAA-471 / A3(2) / M145) protein is 6,7-dimethyl-8-ribityllumazine synthase.